A 124-amino-acid polypeptide reads, in one-letter code: Glycine cleavage system H protein (124 aa).

The 83-residue stretch at 19-101 folds into the Lipoyl-binding domain; that stretch reads VATVGITDHA…ESGAWFFRMT (83 aa). The residue at position 60 (Lys60) is an N6-lipoyllysine.

The protein belongs to the GcvH family. As to quaternary structure, the glycine cleavage system is composed of four proteins: P, T, L and H. (R)-lipoate serves as cofactor.

The glycine cleavage system catalyzes the degradation of glycine. The H protein shuttles the methylamine group of glycine from the P protein to the T protein. The chain is Glycine cleavage system H protein from Acidiphilium cryptum (strain JF-5).